A 465-amino-acid chain; its full sequence is ATP-sulfurylase 3, chloroplastic (465 aa).

A chloroplast-targeting transit peptide spans 1-49; the sequence is MASMSTVFPKPTSFISQPLTKSHKSDSVTTSISFPSNSKTRSLRTISVR.

It belongs to the sulfate adenylyltransferase family. Homotetramer.

The protein localises to the plastid. It is found in the chloroplast stroma. The enzyme catalyses sulfate + ATP + H(+) = adenosine 5'-phosphosulfate + diphosphate. It participates in sulfur metabolism; hydrogen sulfide biosynthesis; sulfite from sulfate: step 1/3. The polypeptide is ATP-sulfurylase 3, chloroplastic (APS3) (Arabidopsis thaliana (Mouse-ear cress)).